Here is a 726-residue protein sequence, read N- to C-terminus: Probable alpha-galactosidase G (726 aa).

Residues Asn-23, Asn-166, and Asn-456 are each glycosylated (N-linked (GlcNAc...) asparagine). Residue Asp-485 is the Nucleophile of the active site. Asp-547 functions as the Proton donor in the catalytic mechanism. Residues Asn-657 and Asn-673 are each glycosylated (N-linked (GlcNAc...) asparagine).

Belongs to the glycosyl hydrolase 36 family. As to quaternary structure, homotetramer. Mg(2+) serves as cofactor. NAD(+) is required as a cofactor.

The protein resides in the secreted. It catalyses the reaction Hydrolysis of terminal, non-reducing alpha-D-galactose residues in alpha-D-galactosides, including galactose oligosaccharides, galactomannans and galactolipids.. Functionally, hydrolyzes a variety of simple alpha-D-galactoside as well as more complex molecules such as oligosaccharides and polysaccharides. Not active on paranitrophenyl-alpha-galactoside and raffinose. The protein is Probable alpha-galactosidase G (aglG) of Emericella nidulans (strain FGSC A4 / ATCC 38163 / CBS 112.46 / NRRL 194 / M139) (Aspergillus nidulans).